A 369-amino-acid chain; its full sequence is Cyclin-dependent kinase 5 activator 2 (369 aa).

Over residues 1 to 11 (MGTVLSLSPAS) the composition is skewed to polar residues. Disordered regions lie at residues 1 to 55 (MGTV…SRLK), 72 to 176 (ASAK…SPRR), and 330 to 369 (EAAA…NLDR). Glycine 2 is lipidated: N-myristoyl glycine. A compositionally biased stretch (basic residues) spans 74–84 (AKKKKGSKKVT). At threonine 84 the chain carries Phosphothreonine. Positions 99–112 (RNRENLLRKGRDGP) are enriched in basic and acidic residues. Residues 122–144 (AVPVPTVPTTAATCEPPSGGSAA) show a composition bias toward low complexity. A compositionally biased stretch (pro residues) spans 145–171 (APPPGSGGGKPPPPPPPAPQAAPPAPG). Over residues 331 to 352 (AAASTGGPPSGSSASTTSSSSA) the composition is skewed to low complexity.

This sequence belongs to the cyclin-dependent kinase 5 activator family. In terms of assembly, heterodimer of a catalytic subunit and a regulatory subunit. Post-translationally, myristoylated. The Gly-2-Ala mutant is absent of the cell periphery, suggesting that a proper myristoylation signal is essential for the proper distribution of CDK5R2 (p39).

It localises to the cell membrane. Its function is as follows. Activator of CDK5/TPKII. This Mus musculus (Mouse) protein is Cyclin-dependent kinase 5 activator 2 (Cdk5r2).